A 497-amino-acid polypeptide reads, in one-letter code: 3-octaprenyl-4-hydroxybenzoate carboxy-lyase (497 aa).

Asn-175 is a binding site for Mn(2+). Prenylated FMN contacts are provided by residues 178–180 (IYR), 192–194 (RWL), and 197–198 (RG). Glu-241 serves as a coordination point for Mn(2+). Asp-290 (proton donor) is an active-site residue.

It belongs to the UbiD family. As to quaternary structure, homohexamer. It depends on prenylated FMN as a cofactor. The cofactor is Mn(2+).

Its subcellular location is the cell membrane. It carries out the reaction a 4-hydroxy-3-(all-trans-polyprenyl)benzoate + H(+) = a 2-(all-trans-polyprenyl)phenol + CO2. The protein operates within cofactor biosynthesis; ubiquinone biosynthesis. Catalyzes the decarboxylation of 3-octaprenyl-4-hydroxy benzoate to 2-octaprenylphenol, an intermediate step in ubiquinone biosynthesis. The chain is 3-octaprenyl-4-hydroxybenzoate carboxy-lyase from Shigella flexneri.